The chain runs to 37 residues: Cytochrome b6-f complex subunit 5 (37 aa).

The helical transmembrane segment at 5 to 25 (LLCGIVLGLIPITLMGLFVAA) threads the bilayer.

This sequence belongs to the PetG family. In terms of assembly, the 4 large subunits of the cytochrome b6-f complex are cytochrome b6, subunit IV (17 kDa polypeptide, PetD), cytochrome f and the Rieske protein, while the 4 small subunits are PetG, PetL, PetM and PetN. The complex functions as a dimer.

The protein resides in the cellular thylakoid membrane. Component of the cytochrome b6-f complex, which mediates electron transfer between photosystem II (PSII) and photosystem I (PSI), cyclic electron flow around PSI, and state transitions. PetG is required for either the stability or assembly of the cytochrome b6-f complex. This chain is Cytochrome b6-f complex subunit 5, found in Synechococcus sp. (strain CC9311).